Reading from the N-terminus, the 952-residue chain is Lysosomal alpha-glucosidase (952 aa).

The N-terminal stretch at 1–27 (MGVRHPPCSHRLLAVCALVSLATAALL) is a signal peptide. Positions 28–69 (GHILLHDFLLVPRELSGSSPVLEETHPAHQQGASRPGPRDAQ) are excised as a propeptide. The tract at residues 47 to 82 (PVLEETHPAHQQGASRPGPRDAQAHPGRPRAVPTQC) is disordered. The 52-residue stretch at 80–131 (TQCDVPPNSRFDCAPDKAITQEQCEARGCCYIPAKQGLQGAQMGQPWCFFPP) folds into the P-type domain. Disulfide bonds link Cys-82/Cys-109, Cys-92/Cys-108, and Cys-103/Cys-127. 3 N-linked (GlcNAc...) asparagine glycosylation sites follow: Asn-140, Asn-233, and Asn-390. Asp-404 serves as a coordination point for substrate. Asn-470 carries an N-linked (GlcNAc...) asparagine glycan. Asp-518 (nucleophile) is an active-site residue. Glu-521 is a catalytic residue. Cys-533 and Cys-558 are disulfide-bonded. Residues Arg-600 and Asp-616 each contribute to the substrate site. A disulfide bridge links Cys-647 with Cys-658. An N-linked (GlcNAc...) asparagine glycan is attached at Asn-652. His-674 serves as a coordination point for substrate. Asn-882 and Asn-925 each carry an N-linked (GlcNAc...) asparagine glycan.

It belongs to the glycosyl hydrolase 31 family. In terms of processing, the different forms of acid glucosidase are obtained by proteolytic processing. Phosphorylation of mannose residues ensures efficient transport of the enzyme to the lysosomes via the mannose 6-phosphate receptor.

Its subcellular location is the lysosome. The protein resides in the lysosome membrane. It catalyses the reaction Hydrolysis of terminal, non-reducing (1-&gt;4)-linked alpha-D-glucose residues with release of alpha-D-glucose.. In terms of biological role, essential for the degradation of glycogen in lysosomes. Has highest activity on alpha-1,4-linked glycosidic linkages, but can also hydrolyze alpha-1,6-linked glucans. The protein is Lysosomal alpha-glucosidase (GAA) of Homo sapiens (Human).